A 443-amino-acid chain; its full sequence is Ribosomal protein uS12 methylthiotransferase RimO (443 aa).

The region spanning 5 to 115 is the MTTase N-terminal domain; sequence PNIGFISLGC…VMKHVHKYVP (111 aa). Positions 14, 50, 79, 147, 151, and 154 each coordinate [4Fe-4S] cluster. Positions 133–374 constitute a Radical SAM core domain; that stretch reads LTPKHYAYLK…MQLQQKISAE (242 aa). Positions 377–443 constitute a TRAM domain; that stretch reads RQKIGRTLSV…ADEYDLWGEI (67 aa).

Belongs to the methylthiotransferase family. RimO subfamily. [4Fe-4S] cluster serves as cofactor.

It is found in the cytoplasm. The catalysed reaction is L-aspartate(89)-[ribosomal protein uS12]-hydrogen + (sulfur carrier)-SH + AH2 + 2 S-adenosyl-L-methionine = 3-methylsulfanyl-L-aspartate(89)-[ribosomal protein uS12]-hydrogen + (sulfur carrier)-H + 5'-deoxyadenosine + L-methionine + A + S-adenosyl-L-homocysteine + 2 H(+). Its function is as follows. Catalyzes the methylthiolation of an aspartic acid residue of ribosomal protein uS12. The chain is Ribosomal protein uS12 methylthiotransferase RimO from Histophilus somni (strain 2336) (Haemophilus somnus).